The sequence spans 165 residues: Myosin regulatory light chain 2A, cardiac muscle isoform (165 aa).

Position 2 is a n,N,N-trimethylalanine (A2). 3 consecutive EF-hand domains span residues 24–59 (AQIQ…LGRL), 94–128 (DPEE…QEGR), and 129–164 (FSQE…GEEK). Ca(2+)-binding residues include D37, N39, D41, and D48.

Myosin is a hexamer of 2 heavy chains and 4 light chains. In terms of processing, the N-terminus is blocked. N,N,N-trimethylalanine, found in other myosin light chains would not have been detected in the N-terminal tryptic peptide in PubMed:7319048 because it would remain trimethylated and ninhydrin negative after hydrolysis.

This Gallus gallus (Chicken) protein is Myosin regulatory light chain 2A, cardiac muscle isoform.